Consider the following 36-residue polypeptide: U14-ctenitoxin-Co1b (36 aa).

As to expression, expressed by the venom gland.

The protein resides in the secreted. Its function is as follows. Not toxic to mice by intracerebroventricular injection. The protein is U14-ctenitoxin-Co1b of Ctenus ornatus (Brazilian spider).